The primary structure comprises 60 residues: Myrmicitoxin(1)-Pr4b (60 aa).

The signal sequence occupies residues 1 to 23 (MKAIIFLFAVLTVVAIIIPIISG). The propeptide occupies 24–33 (EPNAGPHAAS). Residue Gln59 is modified to Glutamine amide.

This sequence belongs to the formicidae venom clade 2 family. Expressed by the venom gland.

Its subcellular location is the secreted. Its function is as follows. Toxin that causes a rapid and irreversible paralysis when intrathoracically injected into insects (blowflies). Does not cause spontaneous nocifensive behaviors by intraplantar injection in mice. In Pogonomyrmex rugosus (Desert harvester ant), this protein is Myrmicitoxin(1)-Pr4b.